We begin with the raw amino-acid sequence, 591 residues long: Frizzled-9 (591 aa).

The N-terminal stretch at 1–22 is a signal peptide; sequence MAVAPLRGALLLWQLLAAGGAA. The Extracellular segment spans residues 23–229; sequence LEIGRFDPER…EVFWSRRDKD (207 aa). One can recognise an FZ domain in the interval 34–155; the sequence is RGAAPCQAVE…NDPHALCMEA (122 aa). Disulfide bonds link C39-C100, C47-C93, C84-C122, C111-C152, and C115-C139. A glycan (N-linked (GlcNAc...) asparagine) is linked at N53. Residues 58–172 form a required for Wnt-activated receptor activity region; the sequence is PNLLGHTSQG…PAEPHKGLGM (115 aa). N158 is a glycosylation site (N-linked (GlcNAc...) asparagine). The helical transmembrane segment at 230-250 threads the bilayer; sequence FALVWMAVWSALCFFSTAFTV. At 251-266 the chain is on the cytoplasmic side; that stretch reads LTFLLEPHRFQYPERP. Residues 267 to 287 traverse the membrane as a helical segment; that stretch reads IIFLSMCYNVYSLAFLIRAVA. The Extracellular segment spans residues 288-315; it reads GAQSVACDQEAGALYVIQEGLENTGCTL. A helical transmembrane segment spans residues 316-336; it reads VFLLLYYFGMASSLWWVVLTL. Residues 337–355 are Cytoplasmic-facing; sequence TWFLAAGKKWGHEAIEAHG. Residues 356-376 traverse the membrane as a helical segment; sequence SYFHMAAWGLPALKTIVILTL. The Extracellular segment spans residues 377–400; sequence RKVAGDELTGLCYVASTDAAALTG. A helical membrane pass occupies residues 401–421; the sequence is FVLVPLSGYLVLGSSFLLTGF. The Cytoplasmic portion of the chain corresponds to 422-447; it reads VALFHIRKIMKTGGTNTEKLEKLMVK. Residues 448 to 468 traverse the membrane as a helical segment; that stretch reads IGVFSILYTVPATCVIVCYVY. Residues 469–508 are Extracellular-facing; that stretch reads ERLNMDFWRLRATEQPCAAAAGPGGRRDCSLPGGSVPTVA. The chain crosses the membrane as a helical span at residues 509–529; it reads VFMLKIFMSLVVGITSGVWVW. At 530–591 the chain is on the cytoplasmic side; it reads SSKTFQTWQS…DPSLENPTHL (62 aa). The Lys-Thr-X-X-X-Trp motif, mediates interaction with the PDZ domain of Dvl family members signature appears at 532 to 537; sequence KTFQTW. Positions 554-591 are required for CTNNB1 accumulation and TCF transcription factor activity; sequence ACRAPGSYGRGTHCHYKAPTVVLHMTKTDPSLENPTHL.

Belongs to the G-protein coupled receptor Fz/Smo family. Post-translationally, ubiquitinated by ZNRF3, leading to its degradation by the proteasome. In terms of tissue distribution, expressed predominantly in adult and fetal brain, testis, eye, skeletal muscle and kidney. Moderately expressed in pancreas, thyroid, adrenal cortex, small intestine and stomach. Detected in fetal liver and kidney. Expressed in neural progenitor cells.

The protein localises to the cell membrane. Functionally, receptor for WNT2 that is coupled to the beta-catenin canonical signaling pathway, which leads to the activation of disheveled proteins, inhibition of GSK-3 kinase, nuclear accumulation of beta-catenin and activation of Wnt target genes. Plays a role in neuromuscular junction (NMJ) assembly by negatively regulating the clustering of acetylcholine receptors (AChR) through the beta-catenin canonical signaling pathway. May play a role in neural progenitor cells (NPCs) viability through the beta-catenin canonical signaling pathway by negatively regulating cell cycle arrest leading to inhibition of neuron apoptotic process. During hippocampal development, regulates neuroblast proliferation and apoptotic cell death. Controls bone formation through non canonical Wnt signaling mediated via ISG15. Positively regulates bone regeneration through non canonical Wnt signaling. The chain is Frizzled-9 (FZD9) from Homo sapiens (Human).